The sequence spans 490 residues: Probable glycine dehydrogenase (decarboxylating) subunit 2 (490 aa).

Lys-273 is subject to N6-(pyridoxal phosphate)lysine.

It belongs to the GcvP family. C-terminal subunit subfamily. The glycine cleavage system is composed of four proteins: P, T, L and H. In this organism, the P 'protein' is a heterodimer of two subunits. Pyridoxal 5'-phosphate is required as a cofactor.

It carries out the reaction N(6)-[(R)-lipoyl]-L-lysyl-[glycine-cleavage complex H protein] + glycine + H(+) = N(6)-[(R)-S(8)-aminomethyldihydrolipoyl]-L-lysyl-[glycine-cleavage complex H protein] + CO2. Its function is as follows. The glycine cleavage system catalyzes the degradation of glycine. The P protein binds the alpha-amino group of glycine through its pyridoxal phosphate cofactor; CO(2) is released and the remaining methylamine moiety is then transferred to the lipoamide cofactor of the H protein. This chain is Probable glycine dehydrogenase (decarboxylating) subunit 2, found in Staphylococcus aureus (strain Newman).